A 208-amino-acid polypeptide reads, in one-letter code: Glutathione S-transferase P (208 aa).

In terms of domain architecture, GST N-terminal spans Met1–Gly78. Glutathione is bound by residues Tyr7, Trp38, Lys42, Gln49–Val50, and Gln62–Ser63. The GST C-terminal domain maps to Asn80–Val202.

This sequence belongs to the GST superfamily. Pi family. Homodimer. Expressed in dopaminergic (DA) neuron (at protein levels).

It carries out the reaction RX + glutathione = an S-substituted glutathione + a halide anion + H(+). Functionally, conjugation of reduced glutathione to a wide number of exogenous and endogenous hydrophobic electrophiles. Prevents dopaminergic CEP neuron degeneration in response to Mn(2+). In Caenorhabditis elegans, this protein is Glutathione S-transferase P (gst-1).